Reading from the N-terminus, the 901-residue chain is Protein translocase subunit SecA (901 aa).

ATP-binding positions include Q87, 105 to 109 (GEGKT), and D512. Residues 858 to 891 (SHQDDDTAAAAALAAQTGDRKVGRNDPCPCGSGK) are disordered. Zn(2+)-binding residues include C885, C887, C896, and H897.

Belongs to the SecA family. Monomer and homodimer. Part of the essential Sec protein translocation apparatus which comprises SecA, SecYEG and auxiliary proteins SecDF-YajC and YidC. Zn(2+) is required as a cofactor.

The protein localises to the cell inner membrane. The protein resides in the cytoplasm. It catalyses the reaction ATP + H2O + cellular proteinSide 1 = ADP + phosphate + cellular proteinSide 2.. Functionally, part of the Sec protein translocase complex. Interacts with the SecYEG preprotein conducting channel. Has a central role in coupling the hydrolysis of ATP to the transfer of proteins into and across the cell membrane, serving both as a receptor for the preprotein-SecB complex and as an ATP-driven molecular motor driving the stepwise translocation of polypeptide chains across the membrane. The chain is Protein translocase subunit SecA from Escherichia fergusonii (strain ATCC 35469 / DSM 13698 / CCUG 18766 / IAM 14443 / JCM 21226 / LMG 7866 / NBRC 102419 / NCTC 12128 / CDC 0568-73).